Consider the following 293-residue polypeptide: PHD finger protein 11A (293 aa).

A C2HC pre-PHD-type zinc finger spans residues 25–61 (KRTCALCPEGHEWSQIYFSPSANIVAHENCLLYSSGL). The segment at 91-143 (LKCSFCKNKGATMGYDLQSCTKNYHLSCAMEDHAILQVDEDHGTYKLFCQKHA) adopts a PHD-type; degenerate zinc-finger fold. Residues 262 to 293 (SSSTSGSLLPPEDHQVRCQESPEVQAGSGDSL) form a disordered region.

It localises to the nucleus. In Mus musculus (Mouse), this protein is PHD finger protein 11A (Phf11a).